The sequence spans 427 residues: Glutamate-1-semialdehyde 2,1-aminomutase (427 aa).

K267 carries the N6-(pyridoxal phosphate)lysine modification.

The protein belongs to the class-III pyridoxal-phosphate-dependent aminotransferase family. HemL subfamily. In terms of assembly, homodimer. Pyridoxal 5'-phosphate is required as a cofactor.

It localises to the cytoplasm. The enzyme catalyses (S)-4-amino-5-oxopentanoate = 5-aminolevulinate. The protein operates within porphyrin-containing compound metabolism; protoporphyrin-IX biosynthesis; 5-aminolevulinate from L-glutamyl-tRNA(Glu): step 2/2. The sequence is that of Glutamate-1-semialdehyde 2,1-aminomutase from Citrifermentans bemidjiense (strain ATCC BAA-1014 / DSM 16622 / JCM 12645 / Bem) (Geobacter bemidjiensis).